Consider the following 584-residue polypeptide: METPREPAGFSKEGLKQLAGKTLGHVYRVIEKRQKPGENIELTEDGRPAQINERKAPLCDCTCFGLPRRYIIAIMSGLGFCISFGIRCNLGVAIVSMVNNSTIHLNGKIIIKEKAKFNWDPETVGLIHGSFFWGYIVTQIPGGYISSRLAANRVFGAAILLTSTLNMFIPSAARGHYGCVIFVRILQGLVEGVTYPACHGIWSKWAPPLERSRLATTSFCGSYAGAVIAMPLAGILVQYTGWSSVFYVYGCFGIFWYMFWILVSYESPAEHPTITAEERCYIEESIGESAKLLGPADKFKTPWRKFFTSMPVYAIIVANFCRSWTFYLLLISQPAYFEEVFGFEISKVGMLSALPHLVMTIIVPIGGQLADHLRSKNILSTTTVRKIMNCGGFGMEATLLLIVGYSHSKGVAISFLVLAVGFSGFAISGFNVNHLDIAPRYASILMGISNGVGTLSGMVCPLIVGAMTKHKTREEWQYVFLIASLVHYGGVIFYGIFASGEKQPWADPELTSDEKCGFIDEDELAEETGDITQSYGALGAPAKSYGATTQLNGGWAEGWDKREEYVQDGVEEGGYGYRQGGNYS.

The Cytoplasmic portion of the chain corresponds to 1-70; sequence METPREPAGF…CTCFGLPRRY (70 aa). The chain crosses the membrane as a helical span at residues 71 to 91; it reads IIAIMSGLGFCISFGIRCNLG. Residues 92 to 124 lie on the Vesicular side of the membrane; sequence VAIVSMVNNSTIHLNGKIIIKEKAKFNWDPETV. N-linked (GlcNAc...) asparagine glycans are attached at residues Asn-99 and Asn-100. Residues 125–145 traverse the membrane as a helical segment; it reads GLIHGSFFWGYIVTQIPGGYI. At 146–148 the chain is on the cytoplasmic side; the sequence is SSR. A helical membrane pass occupies residues 149–169; it reads LAANRVFGAAILLTSTLNMFI. The Vesicular portion of the chain corresponds to 170–177; it reads PSAARGHY. A helical transmembrane segment spans residues 178 to 198; sequence GCVIFVRILQGLVEGVTYPAC. The Cytoplasmic portion of the chain corresponds to 199-216; the sequence is HGIWSKWAPPLERSRLAT. Residues 217–237 traverse the membrane as a helical segment; the sequence is TSFCGSYAGAVIAMPLAGILV. Over 238 to 244 the chain is Vesicular; it reads QYTGWSS. The helical transmembrane segment at 245-265 threads the bilayer; sequence VFYVYGCFGIFWYMFWILVSY. At 266–310 the chain is on the cytoplasmic side; the sequence is ESPAEHPTITAEERCYIEESIGESAKLLGPADKFKTPWRKFFTSM. The helical transmembrane segment at 311-331 threads the bilayer; the sequence is PVYAIIVANFCRSWTFYLLLI. The Vesicular portion of the chain corresponds to 332-349; that stretch reads SQPAYFEEVFGFEISKVG. A helical transmembrane segment spans residues 350–370; the sequence is MLSALPHLVMTIIVPIGGQLA. Residues 371–386 are Cytoplasmic-facing; it reads DHLRSKNILSTTTVRK. Residues 387–407 form a helical membrane-spanning segment; that stretch reads IMNCGGFGMEATLLLIVGYSH. Residues 408–409 are Vesicular-facing; that stretch reads SK. A helical membrane pass occupies residues 410–430; it reads GVAISFLVLAVGFSGFAISGF. Over 431 to 445 the chain is Cytoplasmic; it reads NVNHLDIAPRYASIL. Residues 446–466 traverse the membrane as a helical segment; sequence MGISNGVGTLSGMVCPLIVGA. Residues 467–477 lie on the Vesicular side of the membrane; sequence MTKHKTREEWQ. A helical transmembrane segment spans residues 478–498; that stretch reads YVFLIASLVHYGGVIFYGIFA. At 499-584 the chain is on the cytoplasmic side; the sequence is SGEKQPWADP…YGYRQGGNYS (86 aa).

The protein belongs to the major facilitator superfamily. Sodium/anion cotransporter family. VGLUT subfamily. In terms of tissue distribution, expressed in spinal cord and retinal ganglion cells.

The protein localises to the cytoplasmic vesicle. It localises to the secretory vesicle. It is found in the synaptic vesicle membrane. Its subcellular location is the membrane. The protein resides in the synapse. The protein localises to the synaptosome. It localises to the cell membrane. The catalysed reaction is L-glutamate(out) = L-glutamate(in). It catalyses the reaction 3 Na(+)(out) + phosphate(out) = 3 Na(+)(in) + phosphate(in). The enzyme catalyses phosphate(in) = phosphate(out). It carries out the reaction K(+)(in) + H(+)(out) = K(+)(out) + H(+)(in). The catalysed reaction is chloride(in) = chloride(out). Chloride channel activity is allosterically activated by lumenal H(+) and Cl(-) leading to synaptic vesicles acidification. The L-glutamate transport activity is allosterically activated by lumenal H(+) and Cl(-). The allosteric requirement for H(+) efficiently prevents non-vesicular efflux across the plasma membrane. The L-glutamate uniporter activity exhibits a biphasic dependence on chloride concentration. Multifunctional transporter that transports L-glutamate as well as multiple ions such as chloride, proton, potassium, sodium and phosphate. At the synaptic vesicle membrane, mainly functions as a uniporter which transports preferentially L-glutamate but also, phosphate from the cytoplasm into synaptic vesicles at presynaptic nerve terminals of excitatory neural cells. The L-glutamate or phosphate uniporter activity is electrogenic and is driven by the proton electrochemical gradient, mainly by the electrical gradient established by the vacuolar H(+)-ATPase across the synaptic vesicle membrane. In addition, functions as a chloride channel that allows a chloride permeation through the synaptic vesicle membrane therefore affects the proton electrochemical gradient and promotes synaptic vesicles acidification. Moreover, functions as a vesicular K(+)/H(+) antiport allowing to maintain the electrical gradient and to decrease chemical gradient and therefore sustain vesicular L-glutamate uptake. The vesicular H(+)/H(+) antiport activity is electroneutral. At the plasma membrane, following exocytosis, functions as a symporter of Na(+) and phosphate from the extracellular space to the cytoplasm allowing synaptic phosphate homeostasis regulation. The symporter activity is driven by an inside negative membrane potential and is electrogenic. Also involved in the regulation of retinal hyaloid vessel regression during postnatal development. May also play a role in the endocrine L-glutamatergic system of other tissues such as pineal gland and pancreas. Required for glutamate release by retinotectal synapses and visual acuity. In Danio rerio (Zebrafish), this protein is Vesicular glutamate transporter 2.1 (slc17a6b).